A 257-amino-acid chain; its full sequence is uncharacterized protein (257 aa).

The first 22 residues, 1–22 (MIHSRKLRLWLYLVLLAVFIGA), serve as a signal peptide directing secretion. C23 carries N-palmitoyl cysteine lipidation. C23 carries S-diacylglycerol cysteine lipidation.

Belongs to the staphylococcal tandem lipoprotein family.

The protein localises to the cell membrane. This is an uncharacterized protein from Staphylococcus aureus (strain Mu50 / ATCC 700699).